The primary structure comprises 29 residues: Kunitz-type serine protease inhibitor RsTIQ7 (29 aa).

Residues 6–26 (QCVPTADPGPCKAYIPMWWYN) form the BPTI/Kunitz inhibitor domain.

In terms of biological role, serine protease inhibitor. Inhibits trypsin, elastase, plasmin and kallikrein. The sequence is that of Kunitz-type serine protease inhibitor RsTIQ7 from Rhipicephalus sanguineus (Brown dog tick).